The chain runs to 686 residues: Tripartite terminase subunit 3 (686 aa).

The Walker A motif signature appears at 220–227 (IPRRHGKT). The short motif at 315–320 (LLFVDE) is the Walker B motif element. Residue glutamate 320 is the For ATPase activity of the active site. Residues aspartate 474, glutamate 546, and aspartate 658 each act as for nuclease activity in the active site.

The protein belongs to the herpesviridae TRM3 protein family. In terms of assembly, interacts with the terminase subunits TRM1 and TRM2. Interacts with portal protein.

It is found in the host nucleus. Component of the molecular motor that translocates viral genomic DNA in empty capsid during DNA packaging. Forms a tripartite terminase complex together with TRM1 and TRM2 in the host cytoplasm. Once the complex reaches the host nucleus, it interacts with the capsid portal vertex. This portal forms a ring in which genomic DNA is translocated into the capsid. TRM3 carries an RNase H-like nuclease activity that plays an important role for the cleavage of concatemeric viral DNA into unit length genomes. This chain is Tripartite terminase subunit 3, found in Alcelaphine herpesvirus 1 (strain C500) (AlHV-1).